The primary structure comprises 371 residues: tRNA-specific 2-thiouridylase MnmA (371 aa).

ATP is bound by residues 13–20 (GMSGGVDS) and M39. Residues 99–101 (NPD) are interaction with target base in tRNA. The active-site Nucleophile is the C104. C104 and C200 are disulfide-bonded. G128 provides a ligand contact to ATP. Residues 150–152 (KDQ) are interaction with tRNA. C200 serves as the catalytic Cysteine persulfide intermediate. An interaction with tRNA region spans residues 308 to 309 (RY).

Belongs to the MnmA/TRMU family.

The protein resides in the cytoplasm. It catalyses the reaction S-sulfanyl-L-cysteinyl-[protein] + uridine(34) in tRNA + AH2 + ATP = 2-thiouridine(34) in tRNA + L-cysteinyl-[protein] + A + AMP + diphosphate + H(+). Its function is as follows. Catalyzes the 2-thiolation of uridine at the wobble position (U34) of tRNA, leading to the formation of s(2)U34. This chain is tRNA-specific 2-thiouridylase MnmA, found in Listeria monocytogenes serotype 4a (strain HCC23).